A 339-amino-acid polypeptide reads, in one-letter code: Phenylalanine--tRNA ligase alpha subunit (339 aa).

Glu-247 contributes to the Mg(2+) binding site.

It belongs to the class-II aminoacyl-tRNA synthetase family. Phe-tRNA synthetase alpha subunit type 1 subfamily. As to quaternary structure, tetramer of two alpha and two beta subunits. Mg(2+) serves as cofactor.

It is found in the cytoplasm. The enzyme catalyses tRNA(Phe) + L-phenylalanine + ATP = L-phenylalanyl-tRNA(Phe) + AMP + diphosphate + H(+). This chain is Phenylalanine--tRNA ligase alpha subunit, found in Deinococcus geothermalis (strain DSM 11300 / CIP 105573 / AG-3a).